A 1123-amino-acid polypeptide reads, in one-letter code: Probable serine/threonine-protein kinase nek3 (1123 aa).

In terms of domain architecture, Protein kinase spans 4–264 (YEEIKTIGKG…VNDILELPFI (261 aa)). ATP contacts are provided by residues 10–18 (IGKGSFGRA) and Lys33. Asp130 functions as the Proton acceptor in the catalytic mechanism. Composition is skewed to low complexity over residues 283-307 (NNDS…ISSS) and 327-415 (NNNN…TSLK). 6 disordered regions span residues 283 to 310 (NNDS…STEV), 325 to 415 (NINN…TSLK), 440 to 802 (SKTP…TNSQ), 866 to 887 (SAST…TNTM), 908 to 937 (SVKL…SITD), and 990 to 1020 (SLNN…NQNN). The span at 440-459 (SKTPISGTKNPTTSKITPSI) shows a compositional bias: polar residues. Composition is skewed to low complexity over residues 478–529 (SKPT…SSSV), 557–576 (SNLS…SNSQ), 588–617 (SPTS…SLKS), and 642–653 (NGNSNVNSTVLN). Residues 654-665 (RSVSSLSIQHKP) are compositionally biased toward polar residues. Low complexity-rich tracts occupy residues 666–696 (TNSG…TSTT), 712–738 (STPT…TPST), and 752–802 (SSNG…TNSQ). A compositionally biased stretch (low complexity) spans 908–935 (SVKLSSKSSSPIKTSSSSSSSSSSSSSI).

It belongs to the protein kinase superfamily. NEK Ser/Thr protein kinase family. NIMA subfamily.

It catalyses the reaction L-seryl-[protein] + ATP = O-phospho-L-seryl-[protein] + ADP + H(+). The catalysed reaction is L-threonyl-[protein] + ATP = O-phospho-L-threonyl-[protein] + ADP + H(+). The polypeptide is Probable serine/threonine-protein kinase nek3 (nek3) (Dictyostelium discoideum (Social amoeba)).